A 755-amino-acid polypeptide reads, in one-letter code: Lysosome membrane protein 2-B (755 aa).

At 1–6 (MKHIGR) the chain is on the cytoplasmic side. Residues 7-27 (IVSFPIGLVLIAVGIIIFVVV) traverse the membrane as a helical segment. N-linked (GlcNAc...) asparagine glycosylation is found at Asn28, Asn76, Asn379, Asn465, Asn497, Asn588, Asn607, and Asn680. Topologically, residues 28-727 (NRTIKDEFKK…AYKVDSFRYA (700 aa)) are lumenal. The helical transmembrane segment at 728 to 748 (ITVILIVVGGFLSLISGGLFV) threads the bilayer. At 749-755 (LDKIIDL) the chain is on the cytoplasmic side. The Di-leucine motif motif lies at 752–753 (II).

This sequence belongs to the CD36 family. In terms of processing, heavily glycosylated.

It is found in the lysosome membrane. In terms of biological role, may act as a lysosomal receptor. May be involved in macropinocytosis and fluid phase exocytosis. The polypeptide is Lysosome membrane protein 2-B (lmpB) (Dictyostelium discoideum (Social amoeba)).